Reading from the N-terminus, the 67-residue chain is DNA-directed RNA polymerase subunit omega (67 aa).

It belongs to the RNA polymerase subunit omega family. In terms of assembly, the RNAP catalytic core consists of 2 alpha, 1 beta, 1 beta' and 1 omega subunit. When a sigma factor is associated with the core the holoenzyme is formed, which can initiate transcription.

The catalysed reaction is RNA(n) + a ribonucleoside 5'-triphosphate = RNA(n+1) + diphosphate. Promotes RNA polymerase assembly. Latches the N- and C-terminal regions of the beta' subunit thereby facilitating its interaction with the beta and alpha subunits. In Moorella thermoacetica (strain ATCC 39073 / JCM 9320), this protein is DNA-directed RNA polymerase subunit omega.